A 464-amino-acid polypeptide reads, in one-letter code: tRNA modification GTPase MnmE (464 aa).

Positions 29, 91, and 131 each coordinate (6S)-5-formyl-5,6,7,8-tetrahydrofolate. In terms of domain architecture, TrmE-type G spans 226-387 (GLKVALTGKP…LINYLLKKCG (162 aa)). A K(+)-binding site is contributed by asparagine 236. GTP contacts are provided by residues 236–241 (NVGKSS), 255–261 (TDLPGTT), and 280–283 (DTAG). Serine 240 is a Mg(2+) binding site. K(+)-binding residues include threonine 255, leucine 257, and threonine 260. Mg(2+) is bound at residue threonine 261. Lysine 464 lines the (6S)-5-formyl-5,6,7,8-tetrahydrofolate pocket.

This sequence belongs to the TRAFAC class TrmE-Era-EngA-EngB-Septin-like GTPase superfamily. TrmE GTPase family. In terms of assembly, homodimer. Heterotetramer of two MnmE and two MnmG subunits. K(+) serves as cofactor.

The protein resides in the cytoplasm. Functionally, exhibits a very high intrinsic GTPase hydrolysis rate. Involved in the addition of a carboxymethylaminomethyl (cmnm) group at the wobble position (U34) of certain tRNAs, forming tRNA-cmnm(5)s(2)U34. This is tRNA modification GTPase MnmE from Prochlorococcus marinus (strain NATL2A).